A 1379-amino-acid polypeptide reads, in one-letter code: DNA-directed RNA polymerase subunit beta'' (1379 aa).

The Zn(2+) site is built by Cys220, Cys293, Cys300, and Cys303.

It belongs to the RNA polymerase beta' chain family. RpoC2 subfamily. As to quaternary structure, in plastids the minimal PEP RNA polymerase catalytic core is composed of four subunits: alpha, beta, beta', and beta''. When a (nuclear-encoded) sigma factor is associated with the core the holoenzyme is formed, which can initiate transcription. Zn(2+) serves as cofactor.

It is found in the plastid. Its subcellular location is the chloroplast. It catalyses the reaction RNA(n) + a ribonucleoside 5'-triphosphate = RNA(n+1) + diphosphate. Functionally, DNA-dependent RNA polymerase catalyzes the transcription of DNA into RNA using the four ribonucleoside triphosphates as substrates. This chain is DNA-directed RNA polymerase subunit beta'', found in Crucihimalaya wallichii (Rock-cress).